The following is a 120-amino-acid chain: NADH-ubiquinone oxidoreductase chain 3 (120 aa).

The next 3 membrane-spanning stretches (helical) occupy residues 8–28, 63–83, and 90–110; these read YFIL…ISLL, FYLV…LFPW, and ISYF…IGFI.

The protein belongs to the complex I subunit 3 family.

It localises to the mitochondrion membrane. The catalysed reaction is a ubiquinone + NADH + 5 H(+)(in) = a ubiquinol + NAD(+) + 4 H(+)(out). Core subunit of the mitochondrial membrane respiratory chain NADH dehydrogenase (Complex I) that is believed to belong to the minimal assembly required for catalysis. Complex I functions in the transfer of electrons from NADH to the respiratory chain. The immediate electron acceptor for the enzyme is believed to be ubiquinone. In Cyanidium caldarium (Red alga), this protein is NADH-ubiquinone oxidoreductase chain 3 (ND3).